The following is a 325-amino-acid chain: Elongation factor Ts, mitochondrial (325 aa).

The N-terminal 45 residues, 1-45, are a transit peptide targeting the mitochondrion; sequence MSLLRSLRVFLVARTGSYPAGSLLRQSPQPRHTFYAGPRLSASAS. Lysine 76, lysine 133, and lysine 192 each carry N6-succinyllysine. At serine 270 the chain carries Phosphoserine. At threonine 324 the chain carries Phosphothreonine.

Belongs to the EF-Ts family. Expressed in all tissues, with the highest levels of expression in skeletal muscle, liver and kidney.

The protein resides in the mitochondrion. Associates with the EF-Tu.GDP complex and induces the exchange of GDP to GTP. It remains bound to the aminoacyl-tRNA.EF-Tu.GTP complex up to the GTP hydrolysis stage on the ribosome. In Homo sapiens (Human), this protein is Elongation factor Ts, mitochondrial.